Reading from the N-terminus, the 616-residue chain is Chaperone protein HscA (616 aa).

It belongs to the heat shock protein 70 family.

Its function is as follows. Chaperone involved in the maturation of iron-sulfur cluster-containing proteins. Has a low intrinsic ATPase activity which is markedly stimulated by HscB. Involved in the maturation of IscU. The polypeptide is Chaperone protein HscA (Salmonella paratyphi C (strain RKS4594)).